The primary structure comprises 363 residues: Probable F-box protein At4g22165 (363 aa).

The F-box domain maps to Pro-7–Leu-56.

In Arabidopsis thaliana (Mouse-ear cress), this protein is Probable F-box protein At4g22165.